Here is a 384-residue protein sequence, read N- to C-terminus: H-2 class I histocompatibility antigen, TLA(B) alpha chain (384 aa).

An N-terminal signal peptide occupies residues 1–26 (MRMGTPVPGTLLILLAASQGQTQTCP). Residues 27–116 (GSHSLRYFYT…MLDYYNLSQN (90 aa)) are alpha-1. At 27–314 (GSHSLRYFYT…TSMPNRTTVR (288 aa)) the chain is on the extracellular side. 3 N-linked (GlcNAc...) asparagine glycosylation sites follow: Asn63, Asn112, and Asn116. Residues 117 to 208 (GSHTIQVMYG…ENRKKTQECT (92 aa)) are alpha-2. 2 disulfides stabilise this stretch: Cys127–Cys190 and Cys229–Cys285. Positions 209 to 300 (DPPKTHVTHH…GLPEPLTLRW (92 aa)) are alpha-3. The Ig-like C1-type domain occupies 211–299 (PKTHVTHHPR…EGLPEPLTLR (89 aa)). A connecting peptide region spans residues 301–314 (EPPQTSMPNRTTVR). The N-linked (GlcNAc...) asparagine glycan is linked to Asn309. Residues 315-334 (ALLGAMIILGFMSGSVMMWM) traverse the membrane as a helical segment. Topologically, residues 335–384 (RKNNGGNGDDNTAAYQNEREHLSLDPRAESEALGVEAGMKDLPSAPPLVS) are cytoplasmic. Residues 354–364 (EHLSLDPRAES) are compositionally biased toward basic and acidic residues. Residues 354 to 384 (EHLSLDPRAESEALGVEAGMKDLPSAPPLVS) are disordered.

It belongs to the MHC class I family. Heterodimer of an alpha chain and a beta chain (beta-2-microglobulin). As to expression, TL antigens are only expressed on thymocytes, activated T-lymphocytes and on some thymic leukemias.

The protein resides in the membrane. Its function is as follows. Involved in the presentation of foreign antigens to the immune system. The chain is H-2 class I histocompatibility antigen, TLA(B) alpha chain (H2-T3) from Mus musculus (Mouse).